A 213-amino-acid polypeptide reads, in one-letter code: Protein ORF D (213 aa).

The sequence is that of Protein ORF D from Elephas maximus (Indian elephant).